Consider the following 307-residue polypeptide: Aspartate carbamoyltransferase catalytic subunit (307 aa).

Positions 56 and 57 each coordinate carbamoyl phosphate. Lys84 contacts L-aspartate. Positions 106, 136, and 139 each coordinate carbamoyl phosphate. L-aspartate-binding residues include Arg169 and Arg221. The carbamoyl phosphate site is built by Ala262 and Pro263.

Belongs to the aspartate/ornithine carbamoyltransferase superfamily. ATCase family. Heterododecamer (2C3:3R2) of six catalytic PyrB chains organized as two trimers (C3), and six regulatory PyrI chains organized as three dimers (R2).

It catalyses the reaction carbamoyl phosphate + L-aspartate = N-carbamoyl-L-aspartate + phosphate + H(+). The protein operates within pyrimidine metabolism; UMP biosynthesis via de novo pathway; (S)-dihydroorotate from bicarbonate: step 2/3. Its function is as follows. Catalyzes the condensation of carbamoyl phosphate and aspartate to form carbamoyl aspartate and inorganic phosphate, the committed step in the de novo pyrimidine nucleotide biosynthesis pathway. In Streptococcus pneumoniae serotype 2 (strain D39 / NCTC 7466), this protein is Aspartate carbamoyltransferase catalytic subunit.